Consider the following 140-residue polypeptide: Putative pre-16S rRNA nuclease (140 aa).

This sequence belongs to the YqgF nuclease family.

The protein resides in the cytoplasm. In terms of biological role, could be a nuclease involved in processing of the 5'-end of pre-16S rRNA. In Enterococcus faecalis (strain ATCC 700802 / V583), this protein is Putative pre-16S rRNA nuclease.